Consider the following 414-residue polypeptide: Histidine--tRNA ligase (414 aa).

This sequence belongs to the class-II aminoacyl-tRNA synthetase family. As to quaternary structure, homodimer.

The protein localises to the cytoplasm. The enzyme catalyses tRNA(His) + L-histidine + ATP = L-histidyl-tRNA(His) + AMP + diphosphate + H(+). The polypeptide is Histidine--tRNA ligase (Mycoplasma capricolum subsp. capricolum (strain California kid / ATCC 27343 / NCTC 10154)).